Reading from the N-terminus, the 679-residue chain is Protein hook (679 aa).

The 119-residue stretch at 5 to 123 folds into the Calponin-homology (CH) domain; the sequence is NGMYYSLLEW…RLLQLVLGCA (119 aa). Positions 140 to 627 form a coiled coil; that stretch reads EEELQANIMR…SKTKMSTMEE (488 aa).

This sequence belongs to the hook family. In terms of assembly, homodimer. Interacts with microtubules via its N-terminus.

The protein localises to the cytoplasm. It localises to the cytoskeleton. The protein resides in the endosome. Its subcellular location is the synapse. Involved in endocytic trafficking by stabilizing organelles of the endocytic pathway. Probably acts as a cytoskeletal linker protein required to tether endosome vesicles to the cytoskeleton. Involved in modulation of endocytosis at stages required for down-regulation of membrane proteins that control synapse size. Not involved in synaptic vesicle recycling. Required in R7 cells for boss endocytosis into multivesicular bodies (MVBs). Has a role in regulating adult longevity. In Drosophila mojavensis (Fruit fly), this protein is Protein hook.